The following is a 319-amino-acid chain: Large ribosomal subunit protein uL10 (319 aa).

Residues 286 to 319 (AGDSGASAAPKEEEKAAEPEEESDEEMGFSLFDD) form a disordered region. A compositionally biased stretch (acidic residues) spans 304–319 (PEEESDEEMGFSLFDD).

Belongs to the universal ribosomal protein uL10 family. In terms of assembly, P0 forms a pentameric complex by interaction with dimers of P1 and P2. Post-translationally, phosphorylated.

Functionally, ribosomal protein P0 is the functional equivalent of E.coli protein L10. The polypeptide is Large ribosomal subunit protein uL10 (RP-P0) (Zea mays (Maize)).